Consider the following 206-residue polypeptide: Small ribosomal subunit protein uS4 (206 aa).

The interval 29-52 (LDKRPYAPGQHGQRRGRGRPSDYS) is disordered. The region spanning 96–171 (RRLDNVVFRM…QKRRRVSPWV (76 aa)) is the S4 RNA-binding domain.

Belongs to the universal ribosomal protein uS4 family. As to quaternary structure, part of the 30S ribosomal subunit. Contacts protein S5. The interaction surface between S4 and S5 is involved in control of translational fidelity.

Functionally, one of the primary rRNA binding proteins, it binds directly to 16S rRNA where it nucleates assembly of the body of the 30S subunit. Its function is as follows. With S5 and S12 plays an important role in translational accuracy. This chain is Small ribosomal subunit protein uS4, found in Deinococcus deserti (strain DSM 17065 / CIP 109153 / LMG 22923 / VCD115).